The primary structure comprises 129 residues: Small ribosomal subunit protein uS11c (129 aa).

Belongs to the universal ribosomal protein uS11 family. In terms of assembly, part of the 30S ribosomal subunit.

It is found in the plastid. The protein localises to the chloroplast. The chain is Small ribosomal subunit protein uS11c from Rhodomonas salina (Cryptomonas salina).